Reading from the N-terminus, the 1045-residue chain is Protein phosphatase Slingshot (1045 aa).

The span at 1 to 20 (MALVTVQRSPSVAGSCSNSD) shows a compositional bias: polar residues. Disordered stretches follow at residues 1 to 35 (MALV…GNDR), 58 to 80 (TQSE…SNNS), 143 to 194 (KVGG…DNKN), and 306 to 325 (ESRR…EKEE). Low complexity predominate over residues 66–80 (TDSTRSSNSTQSNNS). A compositionally biased stretch (polar residues) spans 149–174 (GTKSSTSPAVPTQRQLSVEQTATEAS). The segment covering 175 to 185 (SKCDKTADKEN) has biased composition (basic and acidic residues). One can recognise a DEK-C domain in the interval 324-379 (EETESVIKMKLKAIMMSVDLDEVTSKYIRGRLEEILDMDLGEYKSFIDAEMLVILG). Residues 383-524 (APTKIFEHVY…LETYSGMLDA (142 aa)) form the Tyrosine-protein phosphatase domain. The Phosphocysteine intermediate role is filled by Cys-468. Basic and acidic residues predominate over residues 529–547 (EKLQRSKSETNLKSTKDAR). 3 disordered regions span residues 529–631 (EKLQ…PERS), 699–799 (SHLG…GDNR), and 1001–1045 (ACSA…SDSS). Polar residues predominate over residues 560-569 (ALNQAKSKST). Basic residues predominate over residues 586 to 601 (MHRRSIAQKSQRRMVR). Over residues 602–625 (RSSSTSPKTQTAVVTKQQSQSMEN) the composition is skewed to polar residues. Positions 704–713 (SVSGSSSGNI) are enriched in low complexity. Phosphoserine is present on Ser-719. Positions 721 to 732 (CSDVFSSQVDSV) are enriched in low complexity. 2 stretches are compositionally biased toward polar residues: residues 764 to 774 (TPQQQKQQSNA) and 1008 to 1021 (KKTT…SSPV). Low complexity predominate over residues 1029-1045 (SAASNSNSSASNSSDSS).

The protein belongs to the protein-tyrosine phosphatase family. Interacts with actin.

The protein resides in the cytoplasm. It is found in the cytoskeleton. It catalyses the reaction O-phospho-L-tyrosyl-[protein] + H2O = L-tyrosyl-[protein] + phosphate. It carries out the reaction O-phospho-L-seryl-[protein] + H2O = L-seryl-[protein] + phosphate. The catalysed reaction is O-phospho-L-threonyl-[protein] + H2O = L-threonyl-[protein] + phosphate. Protein phosphatase which regulates actin filament dynamics. Dephosphorylates and activates the actin binding/depolymerizing factor tsr/cofilin, which subsequently binds to actin filaments and stimulates their disassembly. Required for axon growth. This chain is Protein phosphatase Slingshot (ssh), found in Drosophila melanogaster (Fruit fly).